A 277-amino-acid chain; its full sequence is 2,3,4,5-tetrahydropyridine-2,6-dicarboxylate N-succinyltransferase (277 aa).

Substrate-binding residues include arginine 106 and aspartate 143.

It belongs to the transferase hexapeptide repeat family. As to quaternary structure, homotrimer.

The protein resides in the cytoplasm. It catalyses the reaction (S)-2,3,4,5-tetrahydrodipicolinate + succinyl-CoA + H2O = (S)-2-succinylamino-6-oxoheptanedioate + CoA. The protein operates within amino-acid biosynthesis; L-lysine biosynthesis via DAP pathway; LL-2,6-diaminopimelate from (S)-tetrahydrodipicolinate (succinylase route): step 1/3. This chain is 2,3,4,5-tetrahydropyridine-2,6-dicarboxylate N-succinyltransferase, found in Xylella fastidiosa (strain Temecula1 / ATCC 700964).